The sequence spans 264 residues: Thymidylate synthase (264 aa).

Arg21 contacts dUMP. His51 provides a ligand contact to (6R)-5,10-methylene-5,6,7,8-tetrahydrofolate. 126 to 127 (RR) contributes to the dUMP binding site. Catalysis depends on Cys146, which acts as the Nucleophile. DUMP-binding positions include 166 to 169 (RSAD), Asn177, and 207 to 209 (HLY). Asp169 contacts (6R)-5,10-methylene-5,6,7,8-tetrahydrofolate. Residue Ala263 coordinates (6R)-5,10-methylene-5,6,7,8-tetrahydrofolate.

It belongs to the thymidylate synthase family. Bacterial-type ThyA subfamily. As to quaternary structure, homodimer.

The protein localises to the cytoplasm. The enzyme catalyses dUMP + (6R)-5,10-methylene-5,6,7,8-tetrahydrofolate = 7,8-dihydrofolate + dTMP. Its pathway is pyrimidine metabolism; dTTP biosynthesis. In terms of biological role, catalyzes the reductive methylation of 2'-deoxyuridine-5'-monophosphate (dUMP) to 2'-deoxythymidine-5'-monophosphate (dTMP) while utilizing 5,10-methylenetetrahydrofolate (mTHF) as the methyl donor and reductant in the reaction, yielding dihydrofolate (DHF) as a by-product. This enzymatic reaction provides an intracellular de novo source of dTMP, an essential precursor for DNA biosynthesis. In Legionella pneumophila (strain Corby), this protein is Thymidylate synthase.